Consider the following 97-residue polypeptide: Co-chaperonin GroES (97 aa).

It belongs to the GroES chaperonin family. In terms of assembly, heptamer of 7 subunits arranged in a ring. Interacts with the chaperonin GroEL.

Its subcellular location is the cytoplasm. Together with the chaperonin GroEL, plays an essential role in assisting protein folding. The GroEL-GroES system forms a nano-cage that allows encapsulation of the non-native substrate proteins and provides a physical environment optimized to promote and accelerate protein folding. GroES binds to the apical surface of the GroEL ring, thereby capping the opening of the GroEL channel. The polypeptide is Co-chaperonin GroES (Buchnera aphidicola subsp. Baizongia pistaciae (strain Bp)).